We begin with the raw amino-acid sequence, 257 residues long: Pimeloyl-[acyl-carrier protein] methyl ester esterase (257 aa).

The 227-residue stretch at 16 to 242 folds into the AB hydrolase-1 domain; the sequence is LVLLHGWGLN…AAHAPFISHP (227 aa). Substrate-binding positions include tryptophan 22, 82–83, and 143–147; these read SL and FLGLQ. Catalysis depends on serine 82, which acts as the Nucleophile. Residues aspartate 207 and histidine 235 contribute to the active site. Histidine 235 serves as a coordination point for substrate.

The protein belongs to the AB hydrolase superfamily. Carboxylesterase BioH family. As to quaternary structure, monomer.

Its subcellular location is the cytoplasm. The catalysed reaction is 6-carboxyhexanoyl-[ACP] methyl ester + H2O = 6-carboxyhexanoyl-[ACP] + methanol + H(+). The protein operates within cofactor biosynthesis; biotin biosynthesis. In terms of biological role, the physiological role of BioH is to remove the methyl group introduced by BioC when the pimeloyl moiety is complete. It allows to synthesize pimeloyl-ACP via the fatty acid synthetic pathway through the hydrolysis of the ester bonds of pimeloyl-ACP esters. In Sodalis glossinidius (strain morsitans), this protein is Pimeloyl-[acyl-carrier protein] methyl ester esterase.